We begin with the raw amino-acid sequence, 959 residues long: Atromentin synthetase invA1 (959 aa).

The tract at residues 59-466 (DSSIQTKTFS…SGRIKETVIV (408 aa)) is adenylation (A) domain. Residues 598–676 (TPQTETEQTL…SLANYIVALK (79 aa)) form the Carrier domain. The interval 603 to 673 (TEQTLAAIYA…VVSSLANYIV (71 aa)) is thiolation and peptide carrier (T) domain. At Ser-635 the chain carries O-(pantetheine 4'-phosphoryl)serine. The thioesterase (TE) domain stretch occupies residues 699–946 (PIFMVHPGVG…LMDFDHVPGF (248 aa)).

This sequence belongs to the ATP-dependent AMP-binding enzyme family.

It participates in secondary metabolite biosynthesis. In terms of biological role, an L-tyrosine:2-oxoglutarate aminotransferase (probably invD) and atromentin synthetase invA1 catalyze consecutive steps to turn over L-tyrosine into atromentin, which represents the generic precursor molecule for the entire terphenylquinone and pulvinic acid family of pigments, which are widely distributed secondary metabolites in homobasidiomycetes. The first step catalyzed by the aminotransferase converts L-tyrosine in to 4-hydroxyphenylpyruvate (4-HPP). Adenylation of two 4-HPP monomers by the invA1 adenylation (A) domain, covalent tethering of the monomers as a thioester and oxoester onto the invA1 thiolation (T) and thioesterase (TE) domains, respectively, and symmetric C-C-bond formation between two monomers catalyzed by the invA1 TE domain leads to atromentin. This chain is Atromentin synthetase invA1 (invA1), found in Paxillus involutus (Naked brimcap).